The chain runs to 366 residues: MAARTVIIDHGSGFLKAGTAGWNEPQMVFPNIVNYLPCKENPGPSYARRRVSLGIDICHPDTFSYPIERGRILNWEGVQYLWSFVLENHRREQEVPPVIITETPLREPADRKKMLEILFELLHVPSVLLADQLQMSLYASGLLTGVVVDSGYGLTRVQPFHQGRPLPASGKTLEFAGQDLSAYLLKSLFKEDCDRRCLFQLETVAVTQMNKCYVPQNLGEALDFRERQQSALDESNTYQLPDGSRVELTPMQRVAPEMFFSPQVFEQPGPSIPRAIVESVESCEISLRPLLVSHVMACGGNTLYPGFTKRLFRELMGDHVSSTKATVWEGSNRNFSVWLGASVVAHLSTYQSEWMSREEYGEHMRM.

It belongs to the actin family. Strongly expressed in testis and pancreas. Weak expression in placenta.

Its subcellular location is the cytoplasm. The protein resides in the cytoskeleton. This is Actin-like protein 8 (ACTL8) from Homo sapiens (Human).